We begin with the raw amino-acid sequence, 303 residues long: N-acetyl-D-glucosamine kinase (303 aa).

Residues 4-11 and 133-140 each bind ATP; these read GFDIGGTK and GVGGGLVL. Zn(2+) contacts are provided by His-157, Cys-177, Cys-179, and Cys-184.

Belongs to the ROK (NagC/XylR) family. NagK subfamily.

The enzyme catalyses N-acetyl-D-glucosamine + ATP = N-acetyl-D-glucosamine 6-phosphate + ADP + H(+). The protein operates within cell wall biogenesis; peptidoglycan recycling. In terms of biological role, catalyzes the phosphorylation of N-acetyl-D-glucosamine (GlcNAc) derived from cell-wall degradation, yielding GlcNAc-6-P. The polypeptide is N-acetyl-D-glucosamine kinase (Salmonella gallinarum (strain 287/91 / NCTC 13346)).